A 311-amino-acid polypeptide reads, in one-letter code: MHCPDKESVYHIPVMLGECLEGLRIDPDGCYVDVTFGGGGHSRAIVEKLSSKGRLYGFDQDADACRNVLQDERFTFVPSNFRYLANFMDYYGEDGVDGILADLGVSSHHFDEEERGFSFRSESPLLDMRMNARAGRNAAAILNEYDASSLSALFYHYGELKQARRLAASIVHYRESLSGGLQTVGQLLEAVRGLISPREEKKQLACIFQALRIEVNDELGALQQMLEAALGCLRSGGRLVVMTYHSLEDRMVKNFLRYGTVKAPDEDSLRLYGAPQSPWQQITRKPLTASTKELSDNPRSRSAKLRIAEKI.

Residues 39-41, D59, F87, D102, and H109 contribute to the S-adenosyl-L-methionine site; that span reads GGH.

It belongs to the methyltransferase superfamily. RsmH family.

The protein resides in the cytoplasm. It carries out the reaction cytidine(1402) in 16S rRNA + S-adenosyl-L-methionine = N(4)-methylcytidine(1402) in 16S rRNA + S-adenosyl-L-homocysteine + H(+). Specifically methylates the N4 position of cytidine in position 1402 (C1402) of 16S rRNA. The sequence is that of Ribosomal RNA small subunit methyltransferase H from Porphyromonas gingivalis (strain ATCC 33277 / DSM 20709 / CIP 103683 / JCM 12257 / NCTC 11834 / 2561).